The chain runs to 573 residues: Probable cytochrome c oxidase subunit 1 (573 aa).

A helical transmembrane segment spans residues 40–60 (IGIMYCVACISFFFIGGLLAL). Position 86 (His-86) interacts with Fe(II)-heme a. A run of 6 helical transmembrane segments spans residues 89–109 (IMLL…VLPL), 121–141 (LNAF…AGFI), 170–190 (LWIM…VNMI), 213–233 (IMVT…ALFG), 258–278 (LFWF…FGIV), and 290–310 (IFGY…SVAV). 2 residues coordinate Cu cation: His-264 and Tyr-268. A cross-link (1'-histidyl-3'-tyrosine (His-Tyr)) is located at residues 264-268 (HPEVY). The Cu cation site is built by His-313 and His-314. 2 consecutive transmembrane segments (helical) span residues 315-335 (MFAT…LIAV) and 359-379 (MLFS…GVLL). His-397 lines the heme a3 pocket. 3 helical membrane passes run 398–418 (FHYV…YFWF), 433–453 (LHFW…HWLG), and 476–496 (VSTI…WNVF). Residue His-399 participates in Fe(II)-heme a binding.

The protein belongs to the heme-copper respiratory oxidase family.

It localises to the cell membrane. It catalyses the reaction 4 Fe(II)-[cytochrome c] + O2 + 8 H(+)(in) = 4 Fe(III)-[cytochrome c] + 2 H2O + 4 H(+)(out). The protein operates within energy metabolism; oxidative phosphorylation. Its function is as follows. Cytochrome c oxidase is the component of the respiratory chain that catalyzes the reduction of oxygen to water. Subunits 1-3 form the functional core of the enzyme complex. CO I is the catalytic subunit of the enzyme. Electrons originating in cytochrome c are transferred via the copper A center of subunit 2 and heme A of subunit 1 to the bimetallic center formed by heme A3 and copper B. The protein is Probable cytochrome c oxidase subunit 1 (ctaD) of Mycobacterium bovis (strain ATCC BAA-935 / AF2122/97).